A 208-amino-acid polypeptide reads, in one-letter code: Uracil phosphoribosyltransferase (208 aa).

5-phospho-alpha-D-ribose 1-diphosphate contacts are provided by residues Arg-78, Arg-103, and 130 to 138; that span reads DPMLATGGS. Residues Ile-193 and 198 to 200 contribute to the uracil site; that span reads GDA. Residue Asp-199 participates in 5-phospho-alpha-D-ribose 1-diphosphate binding.

This sequence belongs to the UPRTase family. Mg(2+) is required as a cofactor.

The catalysed reaction is UMP + diphosphate = 5-phospho-alpha-D-ribose 1-diphosphate + uracil. The protein operates within pyrimidine metabolism; UMP biosynthesis via salvage pathway; UMP from uracil: step 1/1. Allosterically activated by GTP. Functionally, catalyzes the conversion of uracil and 5-phospho-alpha-D-ribose 1-diphosphate (PRPP) to UMP and diphosphate. The chain is Uracil phosphoribosyltransferase from Escherichia coli O139:H28 (strain E24377A / ETEC).